We begin with the raw amino-acid sequence, 363 residues long: Endopolygalacturonase B (363 aa).

The signal sequence occupies residues 1 to 20 (MQLLQSSVIAATVGAALVAA). The propeptide occupies 21-28 (VPVELKAR). Cys31 and Cys46 are disulfide-bonded. PbH1 repeat units follow at residues 158–187 (SDNLNITDVTIDNSAGTAEGHNTDAFDVGS), 188–209 (STYINIDGATVYNQDDCLAINS), 210–230 (GSHITFTNGYCDGGHGLSIGS), 239–260 (VEDVTISNSKVVNSQNGVRIKT), 268–290 (VSNVKFEDITLSGITKYGLIVEQ), and 302–347 (TNGI…SITG). N-linked (GlcNAc...) asparagine glycosylation is present at Asn162. The Proton donor role is filled by Asp202. Cys204 and Cys220 are disulfide-bonded. His224 is an active-site residue. 2 disulfide bridges follow: Cys330/Cys335 and Cys354/Cys363. Asn356 is a glycosylation site (N-linked (GlcNAc...) asparagine).

The protein belongs to the glycosyl hydrolase 28 family.

Its subcellular location is the secreted. The catalysed reaction is (1,4-alpha-D-galacturonosyl)n+m + H2O = (1,4-alpha-D-galacturonosyl)n + (1,4-alpha-D-galacturonosyl)m.. Involved in maceration and soft-rotting of plant tissue. Hydrolyzes the 1,4-alpha glycosidic bonds of de-esterified pectate in the smooth region of the plant cell wall. This is Endopolygalacturonase B (pgaB) from Aspergillus oryzae (strain ATCC 42149 / RIB 40) (Yellow koji mold).